The sequence spans 112 residues: UPF0482 protein SG1468 (112 aa).

Positions 1 to 22 (MNTIPTRCLLGGLLALSLLAYA) are cleaved as a signal peptide.

It belongs to the UPF0482 family.

In Sodalis glossinidius (strain morsitans), this protein is UPF0482 protein SG1468.